The following is a 487-amino-acid chain: Glycogen synthase (487 aa).

Lys15 contacts ADP-alpha-D-glucose.

The protein belongs to the glycosyltransferase 1 family. Bacterial/plant glycogen synthase subfamily.

It carries out the reaction [(1-&gt;4)-alpha-D-glucosyl](n) + ADP-alpha-D-glucose = [(1-&gt;4)-alpha-D-glucosyl](n+1) + ADP + H(+). It functions in the pathway glycan biosynthesis; glycogen biosynthesis. Functionally, synthesizes alpha-1,4-glucan chains using ADP-glucose. This is Glycogen synthase from Leptothrix cholodnii (strain ATCC 51168 / LMG 8142 / SP-6) (Leptothrix discophora (strain SP-6)).